A 336-amino-acid chain; its full sequence is GTPase Obg (336 aa).

Residues 1-159 (MKFVDSATVF…LELAMELKLM (159 aa)) form the Obg domain. Positions 120-143 (GGHGGRGNQHFATSTNQAPRRSEP) are disordered. A compositionally biased stretch (polar residues) spans 129–138 (HFATSTNQAP). The OBG-type G domain maps to 160–323 (ADVGLVGFPN…LKDELWRQVS (164 aa)). GTP is bound by residues 166–173 (GFPNAGKS), 191–195 (FTTLV), 213–216 (DIPG), 280–283 (TKMD), and 304–306 (SSV). Mg(2+)-binding residues include serine 173 and threonine 193.

It belongs to the TRAFAC class OBG-HflX-like GTPase superfamily. OBG GTPase family. Monomer. Mg(2+) is required as a cofactor.

The protein resides in the cytoplasm. An essential GTPase which binds GTP, GDP and possibly (p)ppGpp with moderate affinity, with high nucleotide exchange rates and a fairly low GTP hydrolysis rate. Plays a role in control of the cell cycle, stress response, ribosome biogenesis and in those bacteria that undergo differentiation, in morphogenesis control. In Chlorobium phaeovibrioides (strain DSM 265 / 1930) (Prosthecochloris vibrioformis (strain DSM 265)), this protein is GTPase Obg.